Consider the following 842-residue polypeptide: ATP-binding cassette sub-family B member 6 (842 aa).

Residues 1–26 (MVTVGNYCETEGPAGPAWTQNGLSPC) lie on the Lumenal side of the membrane. A required for the lysosomal targeting region spans residues 1–205 (MVTVGNYCET…SGGLFILGLW (205 aa)). The tract at residues 1–236 (MVTVGNYCET…GNQGRSTDRR (236 aa)) is required for ATPase activity. The cysteines at positions 8 and 26 are disulfide-linked. The helical transmembrane segment at 27–47 (FFFTLVPSTLLTLGVLALVLV) threads the bilayer. Residues 48 to 72 (LPRRRREVPAGPEELSWAAGPRVAP) lie on the Cytoplasmic side of the membrane. The chain crosses the membrane as a helical span at residues 73-93 (YVLQLFLATLQMALPLAGLAG). The Lumenal portion of the chain corresponds to 94 to 106 (RVGTARGVRLPGY). A helical transmembrane segment spans residues 107–127 (LLLASVLESLASVCGLWLLVV). At 128–147 (ERSQARQSLAMGVWMKFRHS) the chain is on the cytoplasmic side. A helical transmembrane segment spans residues 148–168 (LGLLLLWTVTFAAENLALVSW). The Lumenal portion of the chain corresponds to 169 to 185 (NSPQWWWARADLGQQVQ). Residues 186 to 206 (FGLWVLRYVTSGGLFILGLWA) form a helical membrane-spanning segment. The Cytoplasmic portion of the chain corresponds to 207-263 (PGLRPQSYTLHVHEEDQDVGGNQGRSTDRRSTWRDLGRKLRLLSSYLWPRGSPSLQL). The chain crosses the membrane as a helical span at residues 264 to 284 (IVLICLGLMGLERALNVLVPI). One can recognise an ABC transmembrane type-1 domain in the interval 265 to 556 (VLICLGLMGL…FGTYYRMIQT (292 aa)). Over 285–291 (FYRDIVN) the chain is Lumenal. Residues 292–312 (LLTAKAPWSSLAWTVTTYVFL) traverse the membrane as a helical segment. At 313 to 375 (KFLQGGGTGS…TGEVLRIVDR (63 aa)) the chain is on the cytoplasmic side. The helical transmembrane segment at 376–396 (GTSSVTGLLSYLVFSIIPTLA) threads the bilayer. Residue D397 is a topological domain, lumenal. Residues 398–418 (IIIGIIYFSMFFNAWFGLIVF) traverse the membrane as a helical segment. At 419-499 (LCMSLYLILT…STASLVVLNQ (81 aa)) the chain is on the cytoplasmic side. A helical transmembrane segment spans residues 500–520 (TQNLVIGLGLLAGSLLCAYFV). The Lumenal segment spans residues 521 to 529 (SEQKLQVGD). A helical membrane pass occupies residues 530 to 550 (FVLFGTYITQLYMPLNWFGTY). The Cytoplasmic segment spans residues 551-842 (YRMIQTNFID…PEESKPQDTA (292 aa)). The 235-residue stretch at 590-824 (IEFENVHFSY…GGVYAEMWQL (235 aa)) folds into the ABC transporter domain. Residues Y599 and 623 to 634 (GPSGAGKSTILR) contribute to the ATP site.

It belongs to the ABC transporter superfamily. ABCB family. Heavy Metal importer (TC 3.A.1.210) subfamily. In terms of assembly, homodimer. In terms of processing, N-glycosylated.

Its subcellular location is the cell membrane. It is found in the mitochondrion outer membrane. The protein localises to the endoplasmic reticulum membrane. It localises to the golgi apparatus membrane. The protein resides in the endosome membrane. Its subcellular location is the lysosome membrane. It is found in the late endosome membrane. The protein localises to the early endosome membrane. It localises to the secreted. The protein resides in the extracellular exosome. Its subcellular location is the mitochondrion. It is found in the endosome. The protein localises to the multivesicular body membrane. It localises to the melanosome membrane. It carries out the reaction coproporphyrin III(in) + ATP + H2O = coproporphyrin III(out) + ADP + phosphate + H(+). The enzyme catalyses coproporphyrinogen III(in) + ATP + H2O = coproporphyrinogen III(out) + ADP + phosphate + H(+). The catalysed reaction is heme b(in) + ATP + H2O = heme b(out) + ADP + phosphate + H(+). It catalyses the reaction pheophorbide a(in) + ATP + H2O = pheophorbide a(out) + ADP + phosphate + H(+). It carries out the reaction protoporphyrin IX(in) + ATP + H2O = protoporphyrin IX(out) + ADP + phosphate + H(+). The enzyme catalyses coproporphyrin I(in) + ATP + H2O = coproporphyrin I(out) + ADP + phosphate + H(+). The catalysed reaction is uroporphyrin I(in) + ATP + H2O = uroporphyrin I(out) + ADP + phosphate + H(+). It catalyses the reaction uroporphyrin III(in) + ATP + H2O = uroporphyrin III(out) + ADP + phosphate + H(+). Functionally, ATP-dependent transporter that catalyzes the transport of a broad-spectrum of porphyrins from the cytoplasm to the extracellular space through the plasma membrane or into the vesicle lumen. May also function as an ATP-dependent importer of porphyrins from the cytoplasm into the mitochondria, in turn may participate in the de novo heme biosynthesis regulation and in the coordination of heme and iron homeostasis during phenylhydrazine stress. May play a key role in the early steps of melanogenesis producing PMEL amyloid fibrils. In vitro, it confers to cells a resistance to toxic metal such as arsenic and cadmium and against chemotherapeutics agent such as 5-fluorouracil, SN-38 and vincristin. In addition may play a role in the transition metal homeostasis. This is ATP-binding cassette sub-family B member 6 from Mus musculus (Mouse).